Reading from the N-terminus, the 378-residue chain is D-alanine--D-alanine ligase (378 aa).

In terms of domain architecture, ATP-grasp spans 149-374 (KVLLRAAGIP…FRTVVTDLIE (226 aa)). An ATP-binding site is contributed by 189–247 (EAGLQYPLFVKPSRAGSSFGVTKVEQIGDAAALAAAVFEASRHDWRVLVEQGIDAREIE). Residues Asp-328, Glu-341, and Asn-343 each coordinate Mg(2+).

It belongs to the D-alanine--D-alanine ligase family. Mg(2+) is required as a cofactor. Mn(2+) serves as cofactor.

It is found in the cytoplasm. The catalysed reaction is 2 D-alanine + ATP = D-alanyl-D-alanine + ADP + phosphate + H(+). The protein operates within cell wall biogenesis; peptidoglycan biosynthesis. Functionally, cell wall formation. This chain is D-alanine--D-alanine ligase, found in Bifidobacterium animalis subsp. lactis (strain AD011).